A 207-amino-acid chain; its full sequence is ATP synthase subunit 5, mitochondrial (207 aa).

This sequence belongs to the ATPase delta chain family. In terms of assembly, F-type ATPases have 2 components, CF(1) - the catalytic core - and CF(0) - the membrane proton channel. CF(1) has five subunits: alpha(3), beta(3), gamma(1), delta(1), epsilon(1). CF(0) has three main subunits: a, b and c.

It is found in the mitochondrion. The protein resides in the mitochondrion inner membrane. Functionally, mitochondrial membrane ATP synthase (F(1)F(0) ATP synthase or Complex V) produces ATP from ADP in the presence of a proton gradient across the membrane which is generated by electron transport complexes of the respiratory chain. F-type ATPases consist of two structural domains, F(1) - containing the extramembraneous catalytic core and F(0) - containing the membrane proton channel, linked together by a central stalk and a peripheral stalk. During catalysis, ATP synthesis in the catalytic domain of F(1) is coupled via a rotary mechanism of the central stalk subunits to proton translocation. Part of the complex F(0) domain and the peripheric stalk, which acts as a stator to hold the catalytic alpha(3)beta(3) subcomplex and subunit a/ATP6 static relative to the rotary elements. The polypeptide is ATP synthase subunit 5, mitochondrial (ATP5) (Eremothecium gossypii (strain ATCC 10895 / CBS 109.51 / FGSC 9923 / NRRL Y-1056) (Yeast)).